We begin with the raw amino-acid sequence, 519 residues long: Cytochrome P450 monooxygenase apdE (519 aa).

The chain crosses the membrane as a helical span at residues 27–47 (FVFFAFVVYSCFTIAVGWVVY). N-linked (GlcNAc...) asparagine glycosylation is found at N327 and N379. C466 is a binding site for heme. An N-linked (GlcNAc...) asparagine glycan is attached at N508.

The protein belongs to the cytochrome P450 family. It depends on heme as a cofactor.

Its subcellular location is the membrane. It functions in the pathway secondary metabolite biosynthesis. Cytochrome P450 monooxygenase; part of the gene cluster that mediates the biosynthesis of aspyridones. The polyketide-amino acid backbone preaspyridone A is first assembled by the PKS-NRPS hybrid apdA. The assembly of preaspyridone A is initiated by loading of malonyl-CoA onto apdA, followed by decarboxylation to yield the acetyl starter unit. The growing polyketide chain then elongates into a tetraketide. The adpA PKS module catalyzes three Claisen condensations, as well as beta-keto processing and methylation. Alpha-methylation step during polyketide synthesis is a prerequisite and a key checkpoint for chain transfer between PKS and NRPS modules. The downstream NRPS module contains the condensation (C), adenylation (A), and thiolation (T) domains and catalyzes the incorporation of tyrosine via the formation of the L-tyrosinyl-thioester and the amide linkage between L-tyrosinyl-thioester and the tetraketide. The bimodular assembly line is terminated with a reductase (R) domain that facilitates formation and release of the tetramic acid product. Because apdA lacks a designated enoylreductase (ER) domain, the required activity is provided the enoyl reductase apdC. ApdC appears to operate with different stereoselectivity in different PKS cycle. Combined with apdC, apdA is proposed to synthesize preaspyridone A via about 20 enzymatic steps. A number of oxidative steps performed successively by the cytochrome P450 monooxygenases apdE and apdB are required for the conversion of preaspyridone A to aspyridone A. The cytochrome P450 monooxygenase apdE is responsible for the oxidative dephenylation of preaspyridone A. Finally, the predicted FAD-dependent monooxygenase apdD and the acyl-CoA dehydrogenase apdG may be involved in the transformation of aspyridone A into aspyridone B. This chain is Cytochrome P450 monooxygenase apdE, found in Emericella nidulans (strain FGSC A4 / ATCC 38163 / CBS 112.46 / NRRL 194 / M139) (Aspergillus nidulans).